The following is a 159-amino-acid chain: Probable GPI-anchored protein ANS1 (159 aa).

Residues 1-20 (MKCTLVSTLFAITNILVAHA) form the signal peptide. The stretch at 101–114 (AAISQISDGQIQAT) is one PIR1/2/3 repeat. Gly137 carries GPI-anchor amidated glycine lipidation. A propeptide spans 138–159 (AGMKVESKNMGYIVGVAALLFL) (removed in mature form).

It is found in the cell membrane. This is Probable GPI-anchored protein ANS1 (ANS1) from Saccharomyces cerevisiae (strain ATCC 204508 / S288c) (Baker's yeast).